The primary structure comprises 249 residues: Diaminopimelate epimerase (249 aa).

The substrate site is built by Asn11 and Asn60. Cys69 functions as the Proton donor in the catalytic mechanism. Residues 70–71, Asn164, and 182–183 contribute to the substrate site; these read GN and ER. The active-site Proton acceptor is Cys192. Position 193–194 (193–194) interacts with substrate; it reads GT.

This sequence belongs to the diaminopimelate epimerase family. As to quaternary structure, homodimer.

It localises to the cytoplasm. It carries out the reaction (2S,6S)-2,6-diaminopimelate = meso-2,6-diaminopimelate. Its pathway is amino-acid biosynthesis; L-lysine biosynthesis via DAP pathway; DL-2,6-diaminopimelate from LL-2,6-diaminopimelate: step 1/1. Functionally, catalyzes the stereoinversion of LL-2,6-diaminopimelate (L,L-DAP) to meso-diaminopimelate (meso-DAP), a precursor of L-lysine and an essential component of the bacterial peptidoglycan. This Campylobacter jejuni subsp. jejuni serotype O:23/36 (strain 81-176) protein is Diaminopimelate epimerase.